A 203-amino-acid polypeptide reads, in one-letter code: MGANRLNITWHDRVLTKGDYLKRNGHQPLVLWFTGLSGSGKSTLAHAVEEELFRKGCYTYILDGDNIRHGLNSDLGFSEADRRENIRRIGEVAKLFVDAGIIVLAAFISPYREDRERVRALFEPAEFIEVFVNCDLAVCESRDPKGLYRKARSGELKQFTGIDSPYEVPFSPELVVNTACSTVKSGVQSVLAFVRDRGLINGD.

35-42 provides a ligand contact to ATP; it reads GLSGSGKS. Catalysis depends on S109, which acts as the Phosphoserine intermediate.

It belongs to the APS kinase family.

The catalysed reaction is adenosine 5'-phosphosulfate + ATP = 3'-phosphoadenylyl sulfate + ADP + H(+). Its pathway is sulfur metabolism; hydrogen sulfide biosynthesis; sulfite from sulfate: step 2/3. Its function is as follows. Catalyzes the synthesis of activated sulfate. The sequence is that of Adenylyl-sulfate kinase from Geotalea daltonii (strain DSM 22248 / JCM 15807 / FRC-32) (Geobacter daltonii).